A 236-amino-acid polypeptide reads, in one-letter code: 7-cyano-7-deazaguanine synthase 2 (236 aa).

An ATP-binding site is contributed by 11-21 (FSGGQDSATCL). The Zn(2+) site is built by cysteine 199, cysteine 214, cysteine 217, and cysteine 220.

This sequence belongs to the QueC family. Requires Zn(2+) as cofactor.

It catalyses the reaction 7-carboxy-7-deazaguanine + NH4(+) + ATP = 7-cyano-7-deazaguanine + ADP + phosphate + H2O + H(+). Its pathway is purine metabolism; 7-cyano-7-deazaguanine biosynthesis. Catalyzes the ATP-dependent conversion of 7-carboxy-7-deazaguanine (CDG) to 7-cyano-7-deazaguanine (preQ(0)). The protein is 7-cyano-7-deazaguanine synthase 2 of Sphingopyxis alaskensis (strain DSM 13593 / LMG 18877 / RB2256) (Sphingomonas alaskensis).